A 461-amino-acid chain; its full sequence is ATP synthase subunit beta (461 aa).

151–158 (GGAGVGKT) is an ATP binding site.

It belongs to the ATPase alpha/beta chains family. As to quaternary structure, F-type ATPases have 2 components, CF(1) - the catalytic core - and CF(0) - the membrane proton channel. CF(1) has five subunits: alpha(3), beta(3), gamma(1), delta(1), epsilon(1). CF(0) has three main subunits: a(1), b(2) and c(9-12). The alpha and beta chains form an alternating ring which encloses part of the gamma chain. CF(1) is attached to CF(0) by a central stalk formed by the gamma and epsilon chains, while a peripheral stalk is formed by the delta and b chains.

The protein resides in the cell inner membrane. The catalysed reaction is ATP + H2O + 4 H(+)(in) = ADP + phosphate + 5 H(+)(out). Its function is as follows. Produces ATP from ADP in the presence of a proton gradient across the membrane. The catalytic sites are hosted primarily by the beta subunits. This chain is ATP synthase subunit beta, found in Alteromonas mediterranea (strain DSM 17117 / CIP 110805 / LMG 28347 / Deep ecotype).